Consider the following 88-residue polypeptide: Small ribosomal subunit protein uS17 (88 aa).

The protein belongs to the universal ribosomal protein uS17 family. As to quaternary structure, part of the 30S ribosomal subunit.

Its function is as follows. One of the primary rRNA binding proteins, it binds specifically to the 5'-end of 16S ribosomal RNA. This Lactobacillus acidophilus (strain ATCC 700396 / NCK56 / N2 / NCFM) protein is Small ribosomal subunit protein uS17.